The sequence spans 483 residues: Spermatogenesis-defective protein 39 homolog (483 aa).

It belongs to the SPE39 family. Interacts with vps33b. High levels detected in liver and small intestine of larvae at 5 days post-fertilization.

The protein resides in the cytoplasm. Its subcellular location is the cytoplasmic vesicle. It localises to the early endosome. It is found in the recycling endosome. The protein localises to the late endosome. Its function is as follows. Proposed to be involved in endosomal maturation implicating in part vps33b. In epithelial cells, the vps33b:vipas39 complex may play a role in the apical rab11a-dependent recycling pathway and in the maintenance of the apical-basolateral polarity. May play a role in lysosomal trafficking, probably via association with the core HOPS complex in a discrete population of endosomes; the functions seems to be independent of vps33b. May play a role in vesicular trafficking during spermatogenesis. May be involved in direct or indirect transcriptional regulation of E-cadherin. The sequence is that of Spermatogenesis-defective protein 39 homolog (vipas39) from Danio rerio (Zebrafish).